Reading from the N-terminus, the 257-residue chain is Diaminopimelate epimerase (257 aa).

3 residues coordinate substrate: asparagine 13, glutamine 46, and asparagine 66. Cysteine 75 acts as the Proton donor in catalysis. Residues 76–77 (GN), asparagine 145, asparagine 175, and 193–194 (ER) each bind substrate. Catalysis depends on cysteine 202, which acts as the Proton acceptor. 203–204 (GS) lines the substrate pocket.

It belongs to the diaminopimelate epimerase family. Homodimer.

The protein localises to the cytoplasm. The catalysed reaction is (2S,6S)-2,6-diaminopimelate = meso-2,6-diaminopimelate. The protein operates within amino-acid biosynthesis; L-lysine biosynthesis via DAP pathway; DL-2,6-diaminopimelate from LL-2,6-diaminopimelate: step 1/1. In terms of biological role, catalyzes the stereoinversion of LL-2,6-diaminopimelate (L,L-DAP) to meso-diaminopimelate (meso-DAP), a precursor of L-lysine and an essential component of the bacterial peptidoglycan. This Gluconobacter oxydans (strain 621H) (Gluconobacter suboxydans) protein is Diaminopimelate epimerase.